We begin with the raw amino-acid sequence, 214 residues long: MRVKHKPWAKDRLEEFPAIYIKNPEDFKGQWQEVFGNNNPIHIEIGSGKGQFISGMAKANPEINYIGIEMIESVLVSALDKAIEADVPNLRLVARDAKLLEECFEKGEVAQIYLNFSDPWPKKRHTKRRLTNPTFLTIYERLLPKAGEIHFKTDNRSLFEYSLVAFSEYNMLLTFVSLDLHNSDYEGNIKTEYEEKFSAKGFPIYRLEAKFDRN.

Glu44, Glu69, Asp96, and Asp118 together coordinate S-adenosyl-L-methionine. Asp118 is a catalytic residue. Substrate contacts are provided by residues Lys122, Asp154, and 191 to 194; that span reads TEYE.

It belongs to the class I-like SAM-binding methyltransferase superfamily. TrmB family.

It catalyses the reaction guanosine(46) in tRNA + S-adenosyl-L-methionine = N(7)-methylguanosine(46) in tRNA + S-adenosyl-L-homocysteine. Its pathway is tRNA modification; N(7)-methylguanine-tRNA biosynthesis. Functionally, catalyzes the formation of N(7)-methylguanine at position 46 (m7G46) in tRNA. The polypeptide is tRNA (guanine-N(7)-)-methyltransferase (Listeria monocytogenes serotype 4a (strain HCC23)).